We begin with the raw amino-acid sequence, 107 residues long: Integration host factor subunit alpha (107 aa).

The protein belongs to the bacterial histone-like protein family. As to quaternary structure, heterodimer of an alpha and a beta chain.

Functionally, this protein is one of the two subunits of integration host factor, a specific DNA-binding protein that functions in genetic recombination as well as in transcriptional and translational control. This is Integration host factor subunit alpha from Brucella abortus (strain S19).